The primary structure comprises 497 residues: Glutamate--tRNA ligase (497 aa).

Positions 12–22 (PSPTGHLHIGN) match the 'HIGH' region motif. The 'KMSKS' region motif lies at 259-263 (KLSKR). Lys-262 contacts ATP.

Belongs to the class-I aminoacyl-tRNA synthetase family. Glutamate--tRNA ligase type 1 subfamily. In terms of assembly, monomer.

The protein localises to the cytoplasm. It catalyses the reaction tRNA(Glu) + L-glutamate + ATP = L-glutamyl-tRNA(Glu) + AMP + diphosphate. Its function is as follows. Catalyzes the attachment of glutamate to tRNA(Glu) in a two-step reaction: glutamate is first activated by ATP to form Glu-AMP and then transferred to the acceptor end of tRNA(Glu). The chain is Glutamate--tRNA ligase from Lacticaseibacillus casei (strain BL23) (Lactobacillus casei).